The following is a 118-amino-acid chain: Holo-[acyl-carrier-protein] synthase (118 aa).

Mg(2+)-binding residues include aspartate 5 and glutamate 50.

It belongs to the P-Pant transferase superfamily. AcpS family. Mg(2+) serves as cofactor.

It is found in the cytoplasm. It catalyses the reaction apo-[ACP] + CoA = holo-[ACP] + adenosine 3',5'-bisphosphate + H(+). In terms of biological role, transfers the 4'-phosphopantetheine moiety from coenzyme A to a Ser of acyl-carrier-protein. The protein is Holo-[acyl-carrier-protein] synthase of Aliarcobacter butzleri (strain RM4018) (Arcobacter butzleri).